A 211-amino-acid polypeptide reads, in one-letter code: MINLNLVLFGAPGAGKGTQAKFIVDKYGIPQISTGDILRVAVANKTKLGLEAKKFMDAGQLVPDEIVNGLVAERLAEKDCEKGFIMDGFPRNVAQAKVLDEILTKLGKQIEKVIALNVPDKDIIERITGRRTSKVTGKIYHIKFNPPVDEKPEDLVQRADDTEEVVVKRLETYHNQTAPVLDYYKVQNKVTEIDGTKKLEDITQDIFKILG.

ATP is bound at residue 13–18 (GAGKGT). Residues 33–62 (STGDILRVAVANKTKLGLEAKKFMDAGQLV) are NMP. AMP contacts are provided by residues threonine 34, arginine 39, 60–62 (QLV), 88–91 (GFPR), and glutamine 95. The tract at residues 129-161 (GRRTSKVTGKIYHIKFNPPVDEKPEDLVQRADD) is LID. Residues arginine 130 and 139–140 (IY) each bind ATP. 2 residues coordinate AMP: arginine 158 and arginine 169. Lysine 197 lines the ATP pocket.

Belongs to the adenylate kinase family. In terms of assembly, monomer.

Its subcellular location is the cytoplasm. The enzyme catalyses AMP + ATP = 2 ADP. The protein operates within purine metabolism; AMP biosynthesis via salvage pathway; AMP from ADP: step 1/1. Functionally, catalyzes the reversible transfer of the terminal phosphate group between ATP and AMP. Plays an important role in cellular energy homeostasis and in adenine nucleotide metabolism. This is Adenylate kinase from Fusobacterium nucleatum subsp. nucleatum (strain ATCC 25586 / DSM 15643 / BCRC 10681 / CIP 101130 / JCM 8532 / KCTC 2640 / LMG 13131 / VPI 4355).